The primary structure comprises 441 residues: Inner kinetochore subunit mis17 (441 aa).

Positions 160 to 173 (SSILENSPPNKVQR) are enriched in polar residues. A disordered region spans residues 160 to 240 (SSILENSPPN…TSSMAPRNLL (81 aa)). A compositionally biased stretch (low complexity) spans 174-183 (LSSLDSSQDS). Residues 192–201 (VTGTTFSSQA) are compositionally biased toward polar residues. Residues 217-233 (SLTNQSSSLQSSLQTSS) are compositionally biased toward low complexity.

This sequence belongs to the CENP-U/AME1 family. In terms of assembly, component of the heterotetrameric kinetochore subcomplex COMA, which consists of fta2, fta7, mal2 and mis17. The COMA subcomplex is part of a larger constitutive centromere-associated network (CCAN) (also known as central kinetochore Sim4 complex in fission yeast), which is composed of at least cnl2, cnp3, cnp20, fta1, fta2, fta3, fta4, fta6, fta7, mal2, mhf1, mhf2, mis6, mis15, mis17, sim4 and wip1. Interacts with mis6 and mis15.

It localises to the nucleus. It is found in the chromosome. Its subcellular location is the centromere. The protein resides in the kinetochore. Functionally, component of the kinetochore, a multiprotein complex that assembles on centromeric DNA and attaches chromosomes to spindle microtubules, mediating chromosome segregation and sister chromatid segregation during meiosis and mitosis. Component of the inner kinetochore COMA complex, which connects centromere-associated proteins and the outer kinetochore. COMA interacts with other inner kinetochore proteins to form the inner kinetochore constitutive centromere-associated network (CCAN), which serves as a structural platform for outer kinetochore assembly. This Schizosaccharomyces pombe (strain 972 / ATCC 24843) (Fission yeast) protein is Inner kinetochore subunit mis17 (mis17).